A 407-amino-acid polypeptide reads, in one-letter code: Imidazolonepropionase (407 aa).

Positions 75 and 77 each coordinate Fe(3+). 2 residues coordinate Zn(2+): His-75 and His-77. Residues Arg-84, Tyr-147, and His-180 each contribute to the 4-imidazolone-5-propanoate site. Residue Tyr-147 participates in N-formimidoyl-L-glutamate binding. His-245 provides a ligand contact to Fe(3+). Residue His-245 coordinates Zn(2+). 4-imidazolone-5-propanoate is bound at residue Gln-248. A Fe(3+)-binding site is contributed by Asp-320. Asp-320 contributes to the Zn(2+) binding site. N-formimidoyl-L-glutamate contacts are provided by Asn-322 and Gly-324. Ser-325 is a binding site for 4-imidazolone-5-propanoate.

It belongs to the metallo-dependent hydrolases superfamily. HutI family. Requires Zn(2+) as cofactor. Fe(3+) is required as a cofactor.

The protein localises to the cytoplasm. The catalysed reaction is 4-imidazolone-5-propanoate + H2O = N-formimidoyl-L-glutamate. It functions in the pathway amino-acid degradation; L-histidine degradation into L-glutamate; N-formimidoyl-L-glutamate from L-histidine: step 3/3. In terms of biological role, catalyzes the hydrolytic cleavage of the carbon-nitrogen bond in imidazolone-5-propanoate to yield N-formimidoyl-L-glutamate. It is the third step in the universal histidine degradation pathway. The chain is Imidazolonepropionase from Pseudoalteromonas atlantica (strain T6c / ATCC BAA-1087).